Here is a 287-residue protein sequence, read N- to C-terminus: S-methyl-5'-thioadenosine phosphorylase (287 aa).

Phosphate-binding positions include T13 and 55 to 56 (RH). M186 contacts substrate. T187 lines the phosphate pocket. 210–212 (DYD) serves as a coordination point for substrate.

The protein belongs to the PNP/MTAP phosphorylase family. MTAP subfamily. In terms of assembly, homohexamer. Dimer of a homotrimer.

The catalysed reaction is S-methyl-5'-thioadenosine + phosphate = 5-(methylsulfanyl)-alpha-D-ribose 1-phosphate + adenine. It functions in the pathway amino-acid biosynthesis; L-methionine biosynthesis via salvage pathway; S-methyl-5-thio-alpha-D-ribose 1-phosphate from S-methyl-5'-thioadenosine (phosphorylase route): step 1/1. Functionally, catalyzes the reversible phosphorylation of S-methyl-5'-thioadenosine (MTA) to adenine and 5-methylthioribose-1-phosphate. Involved in the breakdown of MTA, a major by-product of polyamine biosynthesis. Responsible for the first step in the methionine salvage pathway after MTA has been generated from S-adenosylmethionine. Has broad substrate specificity with 6-aminopurine nucleosides as preferred substrates. The sequence is that of S-methyl-5'-thioadenosine phosphorylase from Leptospira interrogans serogroup Icterohaemorrhagiae serovar Lai (strain 56601).